Here is a 376-residue protein sequence, read N- to C-terminus: Mannosyl phosphorylinositol ceramide synthase CSH1 (376 aa).

2 helical membrane-spanning segments follow: residues 7–27 (ILII…FDLL) and 274–294 (ILSC…GEFT). Residues 331–351 (NKEKRRNPTRHEYNSRGKRLR) are disordered. The residue at position 354 (Ser-354) is a Phosphoserine.

Belongs to the glycosyltransferase 32 family. In terms of assembly, heterodimer of CSH1 and CSG2.

It localises to the vacuole membrane. The enzyme catalyses a 1D-myo-inositol-1-phospho-N-[(R)-2-hydroxy-very-long-chain fatty acyl]-(R)-4-hydroxysphingoid base + GDP-alpha-D-mannose = an alpha-D-mannosyl-(1&lt;-&gt;6)-1D-myo-inositol-1-phospho-N-[(R)-2-hydroxy-very-long-chain fatty acyl]-(R)-4-hydroxysphingoid base + GDP + H(+). Functionally, involved in the synthesis of mannosyl phosphorylinositol ceramide. Catalyzes the addition of mannosyl to phosphorylinositol ceramide. This chain is Mannosyl phosphorylinositol ceramide synthase CSH1, found in Saccharomyces cerevisiae (strain ATCC 204508 / S288c) (Baker's yeast).